The sequence spans 2242 residues: DEP domain-containing protein DDB_G0279099 (2242 aa).

Disordered stretches follow at residues 388 to 465, 576 to 644, 701 to 730, 871 to 965, 1077 to 1194, 1287 to 1336, 1384 to 1414, 1446 to 1471, and 1502 to 1521; these read SQNT…SNNS, DSNA…YSRV, PILR…FDQK, DPTT…TKKS, QLQL…AFNS, GSQQ…MNGS, SELL…ALPE, AQSS…NTSG, and SNNN…NSLN. Residues 392 to 440 are a coiled coil; it reads IQNNNNNNNNNNNNNNNNNNNNNNNNNNNNNNNNNNNNNSNNNKNNQNN. Positions 581 to 614 are enriched in low complexity; that stretch reads GGNNNNNYNNNNGNGNGHNHNNHNNNNNNNNNND. A compositionally biased stretch (acidic residues) spans 622-631; it reads EPSDFSDTED. 2 stretches are compositionally biased toward polar residues: residues 632–642 and 719–729; these read NSSTTPNSQYS and HPISPSNSFDQ. Residues 872 to 955 are compositionally biased toward low complexity; sequence PTTTTTTGGT…PNSSNTVPNS (84 aa). Residues 1066–1101 adopt a coiled-coil conformation; the sequence is IPTVENNQHQQQLQLEQQEKEKEKARLAALEKKKPF. Over residues 1082–1106 the composition is skewed to basic and acidic residues; it reads QQEKEKEKARLAALEKKKPFPREDS. Low complexity-rich tracts occupy residues 1108–1182 and 1287–1299; these read STLI…ATTA and GSQQ…GSQS. The span at 1300–1311 shows a compositional bias: polar residues; sequence APTSPLTPHKNI. Low complexity-rich tracts occupy residues 1312-1336, 1384-1410, and 1446-1470; these read NTNN…MNGS, SELL…GENN, and AQSS…TNTS. The 74-residue stretch at 1556 to 1629 folds into the DEP domain; the sequence is IGIKMTERKY…DGQFYYRLKE (74 aa). The segment covering 1645–1668 has biased composition (low complexity); the sequence is TNNNFNNNNTNSNNNQQQQQQQQS. Disordered regions lie at residues 1645-1763, 1803-1910, 2122-2145, and 2165-2218; these read TNNN…SMSN, DEAN…QQQQ, NYNN…NLLK, and NSDT…KNEM. A compositionally biased stretch (polar residues) spans 1669 to 1702; it reads IPSVTSSAVNSPNKDSNTPDHSPISSPKQIGNKL. 2 stretches are compositionally biased toward low complexity: residues 1703-1760 and 1807-1848; these read SSSS…IQSS and GDNN…SSNS. Residues 1791–1821 are a coiled coil; the sequence is LTNKEKDKEKEIDEANGDNNNNNNNNNNNNN. Composition is skewed to polar residues over residues 1849 to 1871 and 1879 to 1889; these read GQGS…TNPL and YGSSVQNSNQH. Composition is skewed to low complexity over residues 1890-1910 and 2122-2133; these read QQQQ…QQQQ and NYNNNNNNNNNN. 2 stretches are compositionally biased toward basic and acidic residues: residues 2166–2181 and 2192–2218; these read SDTE…DNNH and DTDH…KNEM.

In the N-terminal section; belongs to the IML1 family.

The protein is DEP domain-containing protein DDB_G0279099 of Dictyostelium discoideum (Social amoeba).